Consider the following 101-residue polypeptide: Small ribosomal subunit protein uS14 (101 aa).

Residues 36–72 are disordered; sequence GTDESREAARAGIQRLPRDASPIRVRNRDGIDGRPRG. Basic and acidic residues predominate over residues 61–70; sequence RNRDGIDGRP.

The protein belongs to the universal ribosomal protein uS14 family. As to quaternary structure, part of the 30S ribosomal subunit. Contacts proteins S3 and S10.

Binds 16S rRNA, required for the assembly of 30S particles and may also be responsible for determining the conformation of the 16S rRNA at the A site. This chain is Small ribosomal subunit protein uS14, found in Clavibacter michiganensis subsp. michiganensis (strain NCPPB 382).